The chain runs to 79 residues: DNA-directed RNA polymerase subunit omega (79 aa).

Belongs to the RNA polymerase subunit omega family. The RNAP catalytic core consists of 2 alpha, 1 beta, 1 beta' and 1 omega subunit. When a sigma factor is associated with the core the holoenzyme is formed, which can initiate transcription.

The enzyme catalyses RNA(n) + a ribonucleoside 5'-triphosphate = RNA(n+1) + diphosphate. In terms of biological role, promotes RNA polymerase assembly. Latches the N- and C-terminal regions of the beta' subunit thereby facilitating its interaction with the beta and alpha subunits. This chain is DNA-directed RNA polymerase subunit omega, found in Thermotoga petrophila (strain ATCC BAA-488 / DSM 13995 / JCM 10881 / RKU-1).